We begin with the raw amino-acid sequence, 116 residues long: Large ribosomal subunit protein bL19 (116 aa).

It belongs to the bacterial ribosomal protein bL19 family.

This protein is located at the 30S-50S ribosomal subunit interface and may play a role in the structure and function of the aminoacyl-tRNA binding site. The chain is Large ribosomal subunit protein bL19 from Staphylococcus aureus (strain USA300).